The chain runs to 540 residues: Mitochondrial antiviral-signaling protein (540 aa).

The residue at position 2 (P2) is an N-acetylproline. Over 2 to 513 (PFAEDKTYKY…REVPCHRPSP (512 aa)) the chain is Cytoplasmic. Residues K7 and K10 each participate in a glycyl lysine isopeptide (Lys-Gly) (interchain with G-Cter in ubiquitin) cross-link. The region spanning 10–77 (KYICRNFSNF…WVEYFIAALR (68 aa)) is the CARD domain. The tract at residues 10 to 77 (KYICRNFSNF…WVEYFIAALR (68 aa)) is required for interaction with NLRX1. C79 carries the S-palmitoyl cysteine lipid modification. The interval 95–297 (YQPRTSDRPP…EAPANSLPSK (203 aa)) is disordered. The segment covering 106–122 (PLEPPSLPAERPGPPTP) has biased composition (pro residues). The tract at residues 143 to 147 (PVQET) is interaction with TRAF2. Polar residues-rich tracts occupy residues 145–165 (QETQ…QTLS) and 179–216 (ESSS…SLTP). Phosphoserine occurs at positions 152, 157, 165, 180, and 188. The tract at residues 153–158 (PGENSE) is interaction with TRAF6. Phosphothreonine is present on T215. Phosphoserine is present on residues S222 and S233. T234 is modified (phosphothreonine). Residue R236 is modified to Asymmetric dimethylarginine. Over residues 241–266 (PGPTGSVVSTGTSFSSSSPGLASAGA) the composition is skewed to low complexity. 2 positions are modified to phosphoserine: S253 and S258. Residues K311 and K325 each participate in a glycyl lysine isopeptide (Lys-Gly) (interchain with G-Cter in ubiquitin) cross-link. Disordered regions lie at residues 314-358 (ANPA…RAGM) and 373-419 (SAST…SELS). Polar residues-rich tracts occupy residues 317–331 (ASVS…TSSK), 339–355 (NALT…NSTR), and 373–382 (SASTVPTDGS). Over residues 388 to 403 (TPAAPTPAGATGGSSA) the composition is skewed to low complexity. S408 is subject to Phosphoserine. The pLxIS motif signature appears at 439 to 442 (LAIS). Position 442 is a phosphoserine; by TBK1 (S442). The tract at residues 455–460 (PEENEY) is interaction with TRAF6. Glycyl lysine isopeptide (Lys-Gly) (interchain with G-Cter in ubiquitin) cross-links involve residues K461 and K500. K461 is covalently cross-linked ((Microbial infection) Glycyl lysine isopeptide (Lys-Gly) (interchain with G-Cter in UFM1)). Residues 476-507 (IQLLEGNPGPPADPDGGPRPQADRKFQEREVP) are disordered. Residues 496 to 507 (QADRKFQEREVP) show a composition bias toward basic and acidic residues. The helical transmembrane segment at 514–534 (GALWLQVAVTGVLVVTLLVVL) threads the bilayer. Over 535-540 (YRRRLH) the chain is Mitochondrial intermembrane.

In terms of assembly, self-associates and polymerizes (via CARD domains) to form 400 nM long three-stranded helical filaments on mitochondria, filament nucleation requires interaction with RIGI whose CARD domains act as a template for filament assembly. Interacts with RIGI, IFIH1/MDA5, TRAF2, TRAF6 and C1QBP. May interact with FADD, RIPK1, CHUK and IKBKB. Interacts (when phosphorylated) with IRF3; following activation and phosphorylation on the pLxIS motif by TBK1, recruits IRF3. Interacts with NLRX1. Interaction with NLRX1 requires the CARD domain. Interacts with PSMA7. Interacts with TRAFD1. Interacts (via C-terminus) with PCBP2 in a complex containing MAVS/IPS1, PCBP2 and ITCH. Interacts with CYLD. Interacts with SRC. Interacts with DHX58/LGP2 and IKBKE. Interacts with STING1. Interacts with IFIT3 (via N-terminus). Interacts with TBK1 only in the presence of IFIT3. Interacts with TTLL12; the interaction prevents MAVS binding to TBK1 and IKBKE. Interacts with MUL1. Interacts with ANKRD17. Interacts with NDFIP1. Interacts with SMURF1; the interaction is mediated by NDFIP1 and leads to MAVS ubiquitination and degradation. Interacts with UBXN1; this interaction inhibits MAVS-mediated antiviral pathway. Interacts (via C-terminus) with GPATCH3; the interaction is markedly increased upon viral infection. Directly interacts (via CARD domain) with ATG5 and ATG12, either as ATG5 and ATG12 monomers or as ATG12-ATG5 conjugates. Interacts with DHX33 (via the helicase C-terminal domain). Interacts with DDX3X (via C-terminus); this interaction occurs rapidly, but transiently after Sendai virus infection. The interaction with DDX3X potentiates MAVS-mediated IFNB induction. Conversely inhibition of this interaction, for instance by HCV core protein, prevents MAVS-mediated IFNB induction. Transiently interacts with TRAF3 early during Sendai virus infection. Interacts with CLPB; the interaction is enhanced by Sendai virus infection. Interacts with TRAF3IP3. Interacts with TOMM70; the interaction is enhanced by Sendai virus infection. Interacts with ZNFX1. Interacts with N4BP3; this interaction promotes the polyubiquitination of MAVS. Interacts with TAX1BP1; this interaction induces MAVS polyubiquitination. Interacts with NLRP3; promoting NLRP3 recruitment to mitochondria and activation of the NLRP3 inflammasome. Interacts with ECSIT; this interaction bridges RIGI to the MAVS complex at the mitochondrion. Interacts with UBL7; this interaction promotes MAVS 'Lys-27'-linked ubiquitination leading to type I interferon production. Interacts (via transmembrane domain) with SMIM30/MAVI1 (via transmembrane domain); the interaction disrupts MAVS interaction with RIGI and inhibits MAVS aggregation, resulting in the repression of type I interferon signaling and innate immune responses. As to quaternary structure, (Microbial infection) Interacts with hepatitis C virus (HCV) NS3/4A protease; this interaction leads to MAVS cleavage, thereby preventing the establishment of an antiviral state. (Microbial infection) Interacts with hepatitis GB virus B NS3/4A protease; this interaction leads to MAVS cleavage. In terms of assembly, (Microbial infection) Interacts with human respiratory syncytial virus/HRSV protein NS1; this interaction disrupts MAVS binding to RIGI. As to quaternary structure, (Microbial infection) Interacts with Andes virus Nnon-structural protein NS-S; this interaction may reduce MAVS ubiquitination and leads to inhibition of MAVS-induced type-I IFN signaling pathway. (Microbial infection) Interacts with Seneca Valley virus protease 3C; this interaction allows the cleavage of MAVS and subsequent suppression of host innate immunity. In terms of assembly, (Microbial infection) Interacts with SARS-CoV virus protein ORF9b; this interaction mediates MAVS proteasomal degradation. As to quaternary structure, (Microbial infection) Interacts with SARS-CoV-2 virus protein M; this interaction impairs MAVS self-association and its recruitment of downstream components. (Microbial infection) Interacts with foot-and-mouth disease virus protein VP1; this interaction competes with TRAF3 interaction to MAVS leading to suppression of host innate immunity. In terms of assembly, (Microbial infection) Interacts with Epstein-Barr virus protein BILF1; this interaction mediates MAVS routing from mitochondria to lysosomes. In terms of processing, following activation, phosphorylated by TBK1 at Ser-442 in the pLxIS motif. The phosphorylated pLxIS motif constitutes an IRF3-binding motif, leading to recruitment of the transcription factor IRF3 to induce type-I interferons and other cytokines. Ubiquitinated. Undergoes 'Lys-48'-linked polyubiquitination catalyzed by ITCH; ITCH-dependent polyubiquitination is mediated by the interaction with PCBP2 and leads to MAVS/IPS1 proteasomal degradation. Ubiquitinated by RNF125, leading to its degradation by the proteasome. Undergoes 'Lys-48'-linked ubiquitination catalyzed by SMURF1. Undergoes 'Lys-48'-linked ubiquitination catalyzed by MARCHF5 at Lys-7 and Lys-500, leading to proteasomal degradation. Ubiquitinated via 'Lys-63'-linked ubiquitination at Lys-10, Lys-311 and Lys-461 by UBE2N and TRIM31, promoting MAVS polymerization and formation of three-stranded helical filaments on mitochondria. Undergoes 'Lys-63'-linked ubiquitination leading to enhanced interaction between MAVS and TRAF2. Undergoes 'Lys-27'-linked ubiquitination by TRIM21 leading to enhanced interaction between MAVS and TBK1. Deubiquitinated by USP10 leading to attenuation of RIGI-mediated MAVS aggregation and production of type I interferon. Undergoes 'Lys-48'-linked polyubiquitination catalyzed by RNF115 leading to its degradation. Post-translationally, palmitoylated by ZHDDC4. Palmitoylation promotes MAVS stabilization and activation by inhibiting 'Lys-48'- but facilitating 'Lys-63'-linked ubiquitination. In terms of processing, proteolytically cleaved by apoptotic caspases during apoptosis, leading to its inactivation. Cleavage by CASP3 during virus-induced apoptosis inactivates it, preventing cytokine overproduction. (Microbial infection) Cleaved and degraded by hepatitis A virus (HAV) protein 3ABC allowing the virus to disrupt the activation of host IRF3 through the MDA5 pathway. Post-translationally, (Microbial infection) Cleaved by the protease 2A of coxsackievirus B3, poliovirus and enterovirus 71 allowing the virus to disrupt the host type I interferon production. In terms of processing, (Microbial infection) Cleaved by Seneca Valley virus protease 3C allowing the virus to suppress interferon type-I production. (Microbial infection) Cleaved by HCV protease NS3/4A, thereby preventing the establishment of an antiviral state. Post-translationally, (Microbial infection) UFMylated by ULF1 in association with Epstein-Barr virus BILF1; leading to MAVS routing to the lysosome. As to expression, present in T-cells, monocytes, epithelial cells and hepatocytes (at protein level). Ubiquitously expressed, with highest levels in heart, skeletal muscle, liver, placenta and peripheral blood leukocytes.

It localises to the mitochondrion outer membrane. Its subcellular location is the mitochondrion. The protein resides in the peroxisome. Adapter required for innate immune defense against viruses. Acts downstream of DHX33, RIGI and IFIH1/MDA5, which detect intracellular dsRNA produced during viral replication, to coordinate pathways leading to the activation of NF-kappa-B, IRF3 and IRF7, and to the subsequent induction of antiviral cytokines such as IFNB and RANTES (CCL5). Peroxisomal and mitochondrial MAVS act sequentially to create an antiviral cellular state. Upon viral infection, peroxisomal MAVS induces the rapid interferon-independent expression of defense factors that provide short-term protection, whereas mitochondrial MAVS activates an interferon-dependent signaling pathway with delayed kinetics, which amplifies and stabilizes the antiviral response. May activate the same pathways following detection of extracellular dsRNA by TLR3. May protect cells from apoptosis. Involved in NLRP3 inflammasome activation by mediating NLRP3 recruitment to mitochondria. This is Mitochondrial antiviral-signaling protein from Homo sapiens (Human).